A 44-amino-acid polypeptide reads, in one-letter code: DNA-directed RNA polymerase subunit Rpo12 (44 aa).

Residues C8, C22, and C25 each coordinate Zn(2+).

The protein belongs to the archaeal Rpo12/eukaryotic RPC10 RNA polymerase subunit family. As to quaternary structure, part of the RNA polymerase complex. It depends on Zn(2+) as a cofactor.

It is found in the cytoplasm. It carries out the reaction RNA(n) + a ribonucleoside 5'-triphosphate = RNA(n+1) + diphosphate. Functionally, DNA-dependent RNA polymerase (RNAP) catalyzes the transcription of DNA into RNA using the four ribonucleoside triphosphates as substrates. This Halobacterium salinarum (strain ATCC 29341 / DSM 671 / R1) protein is DNA-directed RNA polymerase subunit Rpo12.